The chain runs to 149 residues: MTSAPWLELSRTVRFSDTDAAGVMHFQQLLGWCHQAWEESLERYGLTAGSVFPGGRREQPSVALPIVHCHADYRAPVQVGDKLLIRLKPERLDPSSFVVNSQVLLNEQLVASGCLRHVAIDANSRRRCALPDGVDRWLEASSLGRIQPL.

Residue D19 is part of the active site.

It belongs to the 4-hydroxybenzoyl-CoA thioesterase family. DHNA-CoA hydrolase subfamily.

The enzyme catalyses 1,4-dihydroxy-2-naphthoyl-CoA + H2O = 1,4-dihydroxy-2-naphthoate + CoA + H(+). The protein operates within cofactor biosynthesis; phylloquinone biosynthesis. Its pathway is quinol/quinone metabolism; 1,4-dihydroxy-2-naphthoate biosynthesis; 1,4-dihydroxy-2-naphthoate from chorismate: step 7/7. Functionally, catalyzes the hydrolysis of 1,4-dihydroxy-2-naphthoyl-CoA (DHNA-CoA) to 1,4-dihydroxy-2-naphthoate (DHNA), a reaction involved in phylloquinone (vitamin K1) biosynthesis. The chain is 1,4-dihydroxy-2-naphthoyl-CoA hydrolase from Synechococcus sp. (strain CC9605).